The following is a 279-amino-acid chain: Thymidylate synthase (279 aa).

141–142 contacts dUMP; it reads RR. Residue Cys161 is the Nucleophile of the active site. DUMP is bound by residues 181–184, Asn192, and 222–224; these read RSND and HIY. (6R)-5,10-methylene-5,6,7,8-tetrahydrofolate is bound at residue Asp184. Ala278 contributes to the (6R)-5,10-methylene-5,6,7,8-tetrahydrofolate binding site.

This sequence belongs to the thymidylate synthase family. Bacterial-type ThyA subfamily. As to quaternary structure, homodimer.

Its subcellular location is the cytoplasm. It carries out the reaction dUMP + (6R)-5,10-methylene-5,6,7,8-tetrahydrofolate = 7,8-dihydrofolate + dTMP. It functions in the pathway pyrimidine metabolism; dTTP biosynthesis. Functionally, catalyzes the reductive methylation of 2'-deoxyuridine-5'-monophosphate (dUMP) to 2'-deoxythymidine-5'-monophosphate (dTMP) while utilizing 5,10-methylenetetrahydrofolate (mTHF) as the methyl donor and reductant in the reaction, yielding dihydrofolate (DHF) as a by-product. This enzymatic reaction provides an intracellular de novo source of dTMP, an essential precursor for DNA biosynthesis. The chain is Thymidylate synthase from Bacillus licheniformis (strain ATCC 14580 / DSM 13 / JCM 2505 / CCUG 7422 / NBRC 12200 / NCIMB 9375 / NCTC 10341 / NRRL NRS-1264 / Gibson 46).